Consider the following 96-residue polypeptide: Co-chaperonin GroES (96 aa).

Belongs to the GroES chaperonin family. As to quaternary structure, heptamer of 7 subunits arranged in a ring. Interacts with the chaperonin GroEL.

It localises to the cytoplasm. In terms of biological role, together with the chaperonin GroEL, plays an essential role in assisting protein folding. The GroEL-GroES system forms a nano-cage that allows encapsulation of the non-native substrate proteins and provides a physical environment optimized to promote and accelerate protein folding. GroES binds to the apical surface of the GroEL ring, thereby capping the opening of the GroEL channel. This Shewanella denitrificans (strain OS217 / ATCC BAA-1090 / DSM 15013) protein is Co-chaperonin GroES.